The primary structure comprises 194 residues: Adenine phosphoribosyltransferase (194 aa).

The protein belongs to the purine/pyrimidine phosphoribosyltransferase family. In terms of assembly, homodimer.

Its subcellular location is the cytoplasm. The enzyme catalyses AMP + diphosphate = 5-phospho-alpha-D-ribose 1-diphosphate + adenine. It participates in purine metabolism; AMP biosynthesis via salvage pathway; AMP from adenine: step 1/1. Its function is as follows. Catalyzes a salvage reaction resulting in the formation of AMP, that is energically less costly than de novo synthesis. This is Adenine phosphoribosyltransferase from Albidiferax ferrireducens (strain ATCC BAA-621 / DSM 15236 / T118) (Rhodoferax ferrireducens).